Reading from the N-terminus, the 434-residue chain is Adenylosuccinate synthetase (434 aa).

GTP is bound by residues 12 to 18 (GDEGKGK) and 40 to 42 (GHT). The Proton acceptor role is filled by Asp-13. Mg(2+) is bound by residues Asp-13 and Gly-40. IMP is bound by residues 13-16 (DEGK), 38-41 (NAGH), Thr-129, Arg-143, Gln-224, Thr-239, and Arg-303. The active-site Proton donor is His-41. 299–305 (AVTGRPR) contributes to the substrate binding site. GTP-binding positions include Arg-305, 331–333 (KLD), and 413–415 (STG).

This sequence belongs to the adenylosuccinate synthetase family. In terms of assembly, homodimer. Mg(2+) serves as cofactor.

The protein localises to the cytoplasm. It carries out the reaction IMP + L-aspartate + GTP = N(6)-(1,2-dicarboxyethyl)-AMP + GDP + phosphate + 2 H(+). Its pathway is purine metabolism; AMP biosynthesis via de novo pathway; AMP from IMP: step 1/2. Its function is as follows. Plays an important role in the de novo pathway of purine nucleotide biosynthesis. Catalyzes the first committed step in the biosynthesis of AMP from IMP. This is Adenylosuccinate synthetase from Solibacter usitatus (strain Ellin6076).